The following is a 301-amino-acid chain: 33 kDa chaperonin (301 aa).

2 cysteine pairs are disulfide-bonded: Cys239–Cys241 and Cys272–Cys275.

Belongs to the HSP33 family. In terms of processing, under oxidizing conditions two disulfide bonds are formed involving the reactive cysteines. Under reducing conditions zinc is bound to the reactive cysteines and the protein is inactive.

It is found in the cytoplasm. Functionally, redox regulated molecular chaperone. Protects both thermally unfolding and oxidatively damaged proteins from irreversible aggregation. Plays an important role in the bacterial defense system toward oxidative stress. This chain is 33 kDa chaperonin, found in Nostoc punctiforme (strain ATCC 29133 / PCC 73102).